The following is a 233-amino-acid chain: UPF0758 protein RoseRS_0767 (233 aa).

Residues 107-229 (LIRSPTDAAQ…FVSMRERGLG (123 aa)) enclose the MPN domain. Zn(2+)-binding residues include His178, His180, and Asp191. The JAMM motif signature appears at 178 to 191 (HNHPSGDPTPSPED).

It belongs to the UPF0758 family.

In Roseiflexus sp. (strain RS-1), this protein is UPF0758 protein RoseRS_0767.